Here is a 390-residue protein sequence, read N- to C-terminus: Lipid-A-disaccharide synthase (390 aa).

This sequence belongs to the LpxB family.

It carries out the reaction a lipid X + a UDP-2-N,3-O-bis[(3R)-3-hydroxyacyl]-alpha-D-glucosamine = a lipid A disaccharide + UDP + H(+). Its pathway is bacterial outer membrane biogenesis; LPS lipid A biosynthesis. Condensation of UDP-2,3-diacylglucosamine and 2,3-diacylglucosamine-1-phosphate to form lipid A disaccharide, a precursor of lipid A, a phosphorylated glycolipid that anchors the lipopolysaccharide to the outer membrane of the cell. In Haemophilus influenzae (strain PittEE), this protein is Lipid-A-disaccharide synthase.